We begin with the raw amino-acid sequence, 341 residues long: MRVLGLETSCDETGVALYDSERGLLADALFSQIDLHRVYGGVVPELASRDHVKRMLPLIRQVLDESGCTPADIDAIAYTAGPGLVGALLVGASCAQAMAFAWGVPAVGVHHMEGHLLAPMLEEQPPRFPFVALLVSGGHTQLVRVDGIGRYQLLGESVDDAAGEAFDKTAKLIGLGYPGGPEIARLAERGTPGRFVFPRPMTDRPGLDFSFSGLKTFTLNTWQRCVEAGDDSEQTRCDIALAFQTAVVETLLIKCRRALKQTGLKNLVIAGGVSANQALRSGLEKMLGEMKGQVFYARPRFCTDNGAMIAYAGCQRLLAGQHDGPAISVQPRWPMESLPAV.

Fe cation-binding residues include His-111 and His-115. Substrate contacts are provided by residues 134–138 (LVSGG), Asp-167, Gly-180, and Asn-276. A Fe cation-binding site is contributed by Asp-304.

The protein belongs to the KAE1 / TsaD family. Fe(2+) serves as cofactor.

Its subcellular location is the cytoplasm. It carries out the reaction L-threonylcarbamoyladenylate + adenosine(37) in tRNA = N(6)-L-threonylcarbamoyladenosine(37) in tRNA + AMP + H(+). Its function is as follows. Required for the formation of a threonylcarbamoyl group on adenosine at position 37 (t(6)A37) in tRNAs that read codons beginning with adenine. Is involved in the transfer of the threonylcarbamoyl moiety of threonylcarbamoyl-AMP (TC-AMP) to the N6 group of A37, together with TsaE and TsaB. TsaD likely plays a direct catalytic role in this reaction. This Pseudomonas aeruginosa (strain ATCC 15692 / DSM 22644 / CIP 104116 / JCM 14847 / LMG 12228 / 1C / PRS 101 / PAO1) protein is tRNA N6-adenosine threonylcarbamoyltransferase.